A 281-amino-acid chain; its full sequence is Cardosin-F (281 aa).

The Peptidase A1 domain occupies 18-278 (YYGEIGIGTP…DYGNLLVGFA (261 aa)). The active site involves Asp-36. A disulfide bridge links Cys-181 with Cys-185. Asp-190 is a catalytic residue. Asn-213 is a glycosylation site (N-linked (GlcNAc...) asparagine).

The protein belongs to the peptidase A1 family. Heterodimer of a light chain and a heavy chain. An intermediate form is produced first, and undergoes proteolytic processing to remove the internal plant-specific insert (PSI) and the propeptide. Post-translationally, N-glycosylated. In terms of tissue distribution, pistils.

It localises to the microsome membrane. It is found in the protein storage vacuole. Its subcellular location is the secreted. The protein resides in the cell wall. The protein localises to the extracellular space. It localises to the extracellular matrix. With respect to regulation, inhibited by pepstatin. In terms of biological role, aspartic protease with a high preference for bonds between hydrophobic residues. The polypeptide is Cardosin-F (Cynara cardunculus (Cardoon)).